Here is a 130-residue protein sequence, read N- to C-terminus: Lysozyme C (130 aa).

One can recognise a C-type lysozyme domain in the interval 1-130 (KIYERCELAR…LTPYIRGCGV (130 aa)). 4 disulfide bridges follow: Cys6-Cys128, Cys30-Cys116, Cys65-Cys81, and Cys77-Cys95. Residues Glu35 and Asp53 contribute to the active site.

The protein belongs to the glycosyl hydrolase 22 family. As to quaternary structure, monomer.

The protein resides in the secreted. The enzyme catalyses Hydrolysis of (1-&gt;4)-beta-linkages between N-acetylmuramic acid and N-acetyl-D-glucosamine residues in a peptidoglycan and between N-acetyl-D-glucosamine residues in chitodextrins.. Functionally, lysozymes have primarily a bacteriolytic function; those in tissues and body fluids are associated with the monocyte-macrophage system and enhance the activity of immunoagents. This chain is Lysozyme C (LYZ), found in Oryctolagus cuniculus (Rabbit).